A 313-amino-acid polypeptide reads, in one-letter code: Porphobilinogen deaminase (313 aa).

C242 bears the S-(dipyrrolylmethanemethyl)cysteine mark.

It belongs to the HMBS family. As to quaternary structure, monomer. It depends on dipyrromethane as a cofactor.

The catalysed reaction is 4 porphobilinogen + H2O = hydroxymethylbilane + 4 NH4(+). It functions in the pathway porphyrin-containing compound metabolism; protoporphyrin-IX biosynthesis; coproporphyrinogen-III from 5-aminolevulinate: step 2/4. Tetrapolymerization of the monopyrrole PBG into the hydroxymethylbilane pre-uroporphyrinogen in several discrete steps. In Proteus mirabilis (strain HI4320), this protein is Porphobilinogen deaminase.